We begin with the raw amino-acid sequence, 227 residues long: Venom allergen 5 (227 aa).

Residues 1 to 23 (MEISGLVYLIIIVTIIDLPYGKA) form the signal peptide. Disulfide bonds link cysteine 27–cysteine 40, cysteine 31–cysteine 124, cysteine 49–cysteine 117, and cysteine 193–cysteine 210. An SCP domain is found at 68 to 212 (LKEHNDFRQK…WHYHYLVCNY (145 aa)).

The protein belongs to the CRISP family. Venom allergen 5-like subfamily. Expressed by the venom gland.

Its subcellular location is the secreted. The polypeptide is Venom allergen 5 (Vespula maculifrons (Eastern yellow jacket)).